A 378-amino-acid polypeptide reads, in one-letter code: Cytochrome b (378 aa).

The next 4 membrane-spanning stretches (helical) occupy residues 34–54 (FGSL…FLAM), 78–99 (WLLR…YLHV), 114–134 (WLVG…GYVL), and 179–199 (FFTF…IHIL). Positions 84 and 98 each coordinate heme b. Residues His-183 and His-197 each contribute to the heme b site. A ubiquinone is bound at residue His-202. Transmembrane regions (helical) follow at residues 227 to 247 (FKDI…VLIN), 289 to 309 (LGGV…PFYH), 321 to 341 (INQI…WIGA), and 348 to 368 (YVLV…FNPL).

Belongs to the cytochrome b family. In terms of assembly, the main subunits of complex b-c1 are: cytochrome b, cytochrome c1 and the Rieske protein. It depends on heme b as a cofactor.

The protein localises to the mitochondrion inner membrane. Functionally, component of the ubiquinol-cytochrome c reductase complex (complex III or cytochrome b-c1 complex) that is part of the mitochondrial respiratory chain. The b-c1 complex mediates electron transfer from ubiquinol to cytochrome c. Contributes to the generation of a proton gradient across the mitochondrial membrane that is then used for ATP synthesis. This Cochliomyia hominivorax (Primary screw-worm) protein is Cytochrome b (MT-CYB).